Consider the following 447-residue polypeptide: Putative vacuolar cation/proton exchanger 4 (447 aa).

The tract at residues 1–29 (MDKSEMDKINGTNPESTDQAPSLASRPDE) is disordered. Residues 1 to 65 (MDKSEMDKIN…VNWGVFGSMK (65 aa)) are Cytoplasmic-facing. Positions 10–22 (NGTNPESTDQAPS) are enriched in polar residues. Residues 66 to 86 (IVFLKSKLNVLIPCGFLAIFL) traverse the membrane as a helical segment. Residues 87–93 (NYMTQRY) are Extracellular-facing. The helical transmembrane segment at 94-114 (GWVFPLSMLGIIPLAERLGFA) threads the bilayer. The Cytoplasmic segment spans residues 115–122 (TDWQISCE). Residues 123 to 143 (VGRLLNSAFGNATELIISIHA) traverse the membrane as a helical segment. Residues 132-167 (GNATELIISIHALSRGKLHVVQQCLLGSILSNLLLV) are cation selection. At 144-159 (LSRGKLHVVQQCLLGS) the chain is on the extracellular side. A helical membrane pass occupies residues 160–180 (ILSNLLLVLGSAFFSGGLACG). Topologically, residues 181 to 190 (KTMQTFSKAD) are cytoplasmic. The helical transmembrane segment at 191 to 211 (AVVNSGLLLMAVMGLLIPAAL) threads the bilayer. Residues 212–224 (HYTHSEAQFGKSE) are Extracellular-facing. A helical transmembrane segment spans residues 225 to 245 (LALSRFSSCIMLVAYASYLYF). Topologically, residues 246–286 (QLSNNRRRNEANVYPCMPLIKRRIQDDVDGNDDEVPEISKR) are cytoplasmic. The chain crosses the membrane as a helical span at residues 287–307 (EAISWIAIFIAWISMLSYYLV). Residues 308–318 (DAIDGASKAWN) lie on the Extracellular side of the membrane. Residues 319 to 339 (IPVAFISVVLLPVVGNSAGHA) traverse the membrane as a helical segment. A cation selection region spans residues 333 to 368 (GNSAGHANAVMFAVKDKLDISLGVAIGSSIQISMFG). At 340–353 (NAVMFAVKDKLDIS) the chain is on the cytoplasmic side. A helical membrane pass occupies residues 354–374 (LGVAIGSSIQISMFGIPFCVV). Topologically, residues 375 to 384 (MGWMMGKPMD) are extracellular. A helical transmembrane segment spans residues 385–405 (LNFHLFETASLLTTVLVVAFL). Residues 406–413 (LQDGTSNC) lie on the Cytoplasmic side of the membrane. A helical membrane pass occupies residues 414–434 (VKGLMLFLCYLIVAASFYVHA). Residues 435–447 (DPNSKASEKPPQN) lie on the Extracellular side of the membrane.

The protein belongs to the Ca(2+):cation antiporter (CaCA) (TC 2.A.19) family. Cation/proton exchanger (CAX) subfamily.

It is found in the vacuole membrane. Functionally, vacuolar cation/proton exchanger (CAX). Translocates Ca(2+) and other metal ions into vacuoles using the proton gradient formed by H(+)-ATPase and H(+)-pyrophosphatase. This chain is Putative vacuolar cation/proton exchanger 4, found in Oryza sativa subsp. japonica (Rice).